Consider the following 84-residue polypeptide: MQDNEIFEKVQDIVAEQLGIEKTIVTREANFSSDLGADSLDTVELVMAIEEKFAIEIPDEDAEKITNLSEVVDFIKSKLNTISV.

Residues 4–79 (NEIFEKVQDI…EVVDFIKSKL (76 aa)) enclose the Carrier domain. Ser-39 is subject to O-(pantetheine 4'-phosphoryl)serine.

The protein belongs to the acyl carrier protein (ACP) family. In terms of processing, 4'-phosphopantetheine is transferred from CoA to a specific serine of apo-ACP by AcpS. This modification is essential for activity because fatty acids are bound in thioester linkage to the sulfhydryl of the prosthetic group.

The protein resides in the plastid. The protein localises to the chloroplast. It participates in lipid metabolism; fatty acid biosynthesis. In terms of biological role, carrier of the growing fatty acid chain in fatty acid biosynthesis. The protein is Acyl carrier protein of Porphyra purpurea (Red seaweed).